Reading from the N-terminus, the 44-residue chain is Alpha-amylase inhibitor WDAI-3 (44 aa).

Residues Cys-20 and Cys-41 are joined by a disulfide bond.

The protein belongs to the protease inhibitor I6 (cereal trypsin/alpha-amylase inhibitor) family. Homodimer. In terms of processing, the disulfide bonds are essential for the inhibitor activity. As to expression, endosperm.

The protein resides in the secreted. In terms of biological role, alpha-amylase inhibitor. This Triticum aestivum (Wheat) protein is Alpha-amylase inhibitor WDAI-3 (IHA-B1-2).